A 331-amino-acid chain; its full sequence is Glyceraldehyde-3-phosphate dehydrogenase (331 aa).

Residues 12–13, D34, R78, and T120 contribute to the NAD(+) site; that span reads RI. D-glyceraldehyde 3-phosphate is bound by residues 149-151, T180, 209-210, and R232; these read SCT and TG. The active-site Nucleophile is C150. Position 314 (N314) interacts with NAD(+).

This sequence belongs to the glyceraldehyde-3-phosphate dehydrogenase family. As to quaternary structure, homotetramer.

It localises to the cytoplasm. The enzyme catalyses D-glyceraldehyde 3-phosphate + phosphate + NAD(+) = (2R)-3-phospho-glyceroyl phosphate + NADH + H(+). It participates in carbohydrate degradation; glycolysis; pyruvate from D-glyceraldehyde 3-phosphate: step 1/5. Its function is as follows. Catalyzes the oxidative phosphorylation of glyceraldehyde 3-phosphate (G3P) to 1,3-bisphosphoglycerate (BPG) using the cofactor NAD. The first reaction step involves the formation of a hemiacetal intermediate between G3P and a cysteine residue, and this hemiacetal intermediate is then oxidized to a thioester, with concomitant reduction of NAD to NADH. The reduced NADH is then exchanged with the second NAD, and the thioester is attacked by a nucleophilic inorganic phosphate to produce BPG. The sequence is that of Glyceraldehyde-3-phosphate dehydrogenase (gapA) from Shimwellia blattae (strain ATCC 29907 / DSM 4481 / JCM 1650 / NBRC 105725 / CDC 9005-74) (Escherichia blattae).